Here is a 332-residue protein sequence, read N- to C-terminus: Ribosomal RNA small subunit methyltransferase C (332 aa).

The protein belongs to the methyltransferase superfamily. RsmC family. In terms of assembly, monomer.

The protein resides in the cytoplasm. It carries out the reaction guanosine(1207) in 16S rRNA + S-adenosyl-L-methionine = N(2)-methylguanosine(1207) in 16S rRNA + S-adenosyl-L-homocysteine + H(+). Its function is as follows. Specifically methylates the guanine in position 1207 of 16S rRNA in the 30S particle. The chain is Ribosomal RNA small subunit methyltransferase C from Pseudomonas putida (strain ATCC 47054 / DSM 6125 / CFBP 8728 / NCIMB 11950 / KT2440).